Reading from the N-terminus, the 169-residue chain is Nucleoside diphosphate kinase 3 (169 aa).

ADP contacts are provided by Lys29, Arg105, Thr111, Arg122, Val129, and Asn132. The Pros-phosphohistidine intermediate role is filled by His135.

Belongs to the NDK family. In terms of assembly, homohexamer. Interacts (via its N-terminal region) with KAT5; this interaction enables recruitment of NME3 at DNA damage sites where it plays a role in the repair of DNA. Found in association with several ciliary nephronophthisis proteins, including NEK8, CEP164, ANKS6. Mg(2+) serves as cofactor.

It localises to the mitochondrion outer membrane. The protein resides in the cytoplasm. The protein localises to the cytoskeleton. It is found in the cilium basal body. The catalysed reaction is a 2'-deoxyribonucleoside 5'-diphosphate + ATP = a 2'-deoxyribonucleoside 5'-triphosphate + ADP. It catalyses the reaction a ribonucleoside 5'-diphosphate + ATP = a ribonucleoside 5'-triphosphate + ADP. Its function is as follows. Catalyzes the phosphorylation of ribonucleosides and deoxyribonucleoside diphosphates, other than ATP, into the corresponding triphosphates with ATP as the major phosphate donor. The ATP gamma phosphate is transferred to the nucleoside diphosphate beta phosphate via a ping-pong mechanism, using a phosphorylated active-site intermediate. Through the catalyzed exchange of gamma-phosphate between di- and triphosphonucleosides participates in regulation of intracellular nucleotide homeostasis. Inhibits granulocyte differentiation. May be required for ciliary function during renal development. Independently of its kinase activity, facilitates mitochondrial tethering prior to membrane fusion through its direct membrane-binding and hexamerization. Implicated in repair of both single- and double-stranded breaks in DNA through its association with the ribonucleotide reductase complex (RNR complex) via its interaction with the histone acetyltransferase KAT5, this interaction enables recruitment of NME3 at DNA damage sites where it plays a role in the repair of DNA, independently of its kinase activity. The protein is Nucleoside diphosphate kinase 3 of Homo sapiens (Human).